A 183-amino-acid chain; its full sequence is Thymidine kinase (183 aa).

Residue 11 to 18 (GPMFSGKT) participates in ATP binding. Catalysis depends on E89, which acts as the Proton acceptor. A substrate-binding site is contributed by F119. Positions 144 and 147 each coordinate Zn(2+). Substrate is bound at residue 163–167 (VMDIG). Zn(2+)-binding residues include C176 and C179.

This sequence belongs to the thymidine kinase family.

The catalysed reaction is thymidine + ATP = dTMP + ADP + H(+). The protein is Thymidine kinase (TK) of Vertebrata (FPV).